The following is a 264-amino-acid chain: Non-homologous end-joining factor xrc4 (264 aa).

Basic and acidic residues predominate over residues 173 to 186 (RNNEDNEDNHHINY). Residues 173-264 (RNNEDNEDNH…SHESSETVSE (92 aa)) form a disordered region. Residues 200 to 209 (QEGVNSSAVS) show a composition bias toward polar residues. A compositionally biased stretch (basic and acidic residues) spans 248 to 264 (DDSHRRSSHESSETVSE).

Belongs to the XRCC4-XLF family. XRCC4 subfamily. In terms of assembly, interacts with lig4; the interaction is direct.

It is found in the nucleus. In terms of biological role, involved in double-strand break repair via non-homologous end joining (NHEJ); the repair of a double-strand break in DNA in which the two broken ends are rejoined with little or no sequence complementarity. The chain is Non-homologous end-joining factor xrc4 from Schizosaccharomyces pombe (strain 972 / ATCC 24843) (Fission yeast).